A 258-amino-acid chain; its full sequence is Thiazole synthase (258 aa).

K98 acts as the Schiff-base intermediate with DXP in catalysis. Residues G159, 185 to 186 (AG), and 207 to 208 (NT) contribute to the 1-deoxy-D-xylulose 5-phosphate site.

It belongs to the ThiG family. Homotetramer. Forms heterodimers with either ThiH or ThiS.

Its subcellular location is the cytoplasm. The enzyme catalyses [ThiS sulfur-carrier protein]-C-terminal-Gly-aminoethanethioate + 2-iminoacetate + 1-deoxy-D-xylulose 5-phosphate = [ThiS sulfur-carrier protein]-C-terminal Gly-Gly + 2-[(2R,5Z)-2-carboxy-4-methylthiazol-5(2H)-ylidene]ethyl phosphate + 2 H2O + H(+). It functions in the pathway cofactor biosynthesis; thiamine diphosphate biosynthesis. Catalyzes the rearrangement of 1-deoxy-D-xylulose 5-phosphate (DXP) to produce the thiazole phosphate moiety of thiamine. Sulfur is provided by the thiocarboxylate moiety of the carrier protein ThiS. In vitro, sulfur can be provided by H(2)S. The protein is Thiazole synthase of Bacillus thuringiensis subsp. konkukian (strain 97-27).